A 704-amino-acid polypeptide reads, in one-letter code: MLKLFSAFRKDKIWDFDGGIHPPEMKTQSNGTPLRQVPLAPRFVIPLKQHIGAEGELCVSVGDRVLRGQALTRGRGRMLPVHAPTSGTVIAIAPHSTAHPSALAELSVIIDADGEDRWIEREGWSDYRAHSREALIERIHQYGVAGLGGAGFPTGVKLQGGGDKITTLIINAAECEPYITADDRLMQDCAAQIVEGIRILAHILQPREVLIGIEDNKPQAISMLRAVLADAHDISLRVIPTKYPSGGAKQLTQILTEKQVPHGGRSSDIGVLMQNVGTAYAVKRAVVDGEPITERVVTLTGEAVSRPGNVWARLGTPVRHLLNDAGFCPSADQMVIMGGPLMGFTLPWLDVPVVKITNCLLAPSVAEMGAPQEEKSCIRCSACADACPADLLPQQLYWFSKGQQHDKATAHHIADCIECGACAWVCPSNIPLVQYFRQEKAEINAIRLEEKRAAEAKARFEARQARLEREKAARLARHKSAAVQPAAKDQDAIAAALARVKEKQAQATQPVVIQAGSQPDNSAVIAAREARKAQARAKQAAHPMADSAIPGDDPSKAAVEAAIARAKARKQEQQAGSEPAEPVDPRKAAVEAAIARAKARKQEQQAGSEPVEAVDPRKAAVEAAIARAKARKQEQQTGSEPAEPIDPRKAAVEAAIARAKARKQEQQAGSEPAEPADPRKAAVAAAIARVQAKKAAQQQVVNED.

2 4Fe-4S ferredoxin-type domains span residues 368–397 and 407–436; these read MGAPQEEKSCIRCSACADACPADLLPQQLY and KATAHHIADCIECGACAWVCPSNIPLVQYF. [4Fe-4S] cluster contacts are provided by Cys-377, Cys-380, Cys-383, Cys-387, Cys-416, Cys-419, Cys-422, and Cys-426. The tract at residues 536 to 684 is disordered; that stretch reads RAKQAAHPMA…PADPRKAAVA (149 aa). Low complexity predominate over residues 556–565; sequence KAAVEAAIAR.

The protein belongs to the 4Fe4S bacterial-type ferredoxin family. RnfC subfamily. The complex is composed of six subunits: RsxA, RsxB, RsxC, RsxD, RsxE and RsxG. Requires [4Fe-4S] cluster as cofactor.

The protein resides in the cell inner membrane. Functionally, part of a membrane-bound complex that couples electron transfer with translocation of ions across the membrane. Required to maintain the reduced state of SoxR. In Salmonella choleraesuis (strain SC-B67), this protein is Ion-translocating oxidoreductase complex subunit C.